A 791-amino-acid polypeptide reads, in one-letter code: MDNLDPNSSLQVEKLRNRKSRAVWQNNNTTTHNNPYANLSTGEKSRSRHNTGSSYVSPYGGGNGEENAYTGNNNKSNTSGNLLQVPGAGGGGDLNSNKKQSRRMSIHVSARQHGRSFSQTGPIDMANLPALPKIGGVTTSGVGGAGGDVMTRTGGLTIEQKIFKELSQGSAAEVDDYYKTLLKQKNLITRDIKDNINQNQKNILQLTKDLKETQEELIELRGTTKELYEVLGYFKESAQRRLELEFEPETQKELHSPQKSNQLGIPSNKKKDRSSIMVLKKMWDSQLQSLFKHVDGASKFVQPLPNRHIVAESGRWFEVNVGNWKPSYPTHLFIFNDLILIAVKKSSSSSQEPTTGGSNGGSKSRLQAVQCWPLTQVSLQQIKSPKKDDDKMYFINLKSKSLSYVYSTDRYDHFVKVTEAFNKGRNEMIQSERLLDSRLSSPSNNNGDSKEEKRQLRESLRNSGNYKEGVTDDAGGAATGGGRKSAGTPNRNSTDYVLHDISARVHSRNRSQDLGNNFKLANNGKSQFFNEIKTLEDRLDDVDVEISHNQYAEAVELISIIESKLRNIENALTNQRNGGKNVNIADELLLLDVSKLKIKNRKENVSNGLIFDLQHNIAKLKQDDIDNILTLFDNLEQLDRGVQGYLDSMSAYLSTTVSKLIVGLQGSTKIDVVNYLSNLMVINVSIVKRTIQTYEQIIAPILKRHGDVDSSGLINWCIDEFTKLCKQIKKHLYGTLLISSGINMETDEPIYKVKERKLYDNFLKIMQPQLEELKSVGLNVDYIFESILNLE.

The tract at residues 16–101 is disordered; that stretch reads RNRKSRAVWQ…GDLNSNKKQS (86 aa). Residues 23 to 42 are compositionally biased toward polar residues; that stretch reads VWQNNNTTTHNNPYANLSTG. Residues 70–83 show a composition bias toward low complexity; sequence TGNNNKSNTSGNLL. Residues 190–229 adopt a coiled-coil conformation; that stretch reads RDIKDNINQNQKNILQLTKDLKETQEELIELRGTTKELYE. Lys193 participates in a covalent cross-link: Glycyl lysine isopeptide (Lys-Gly) (interchain with G-Cter in ubiquitin). Basic and acidic residues predominate over residues 247–256; that stretch reads EPETQKELHS. Disordered regions lie at residues 247-271 and 432-495; these read EPETQKELHSPQKSNQLGIPSNKKK and ERLL…NSTD. Over residues 438-447 the composition is skewed to polar residues; that stretch reads RLSSPSNNNG. Over residues 448–460 the composition is skewed to basic and acidic residues; that stretch reads DSKEEKRQLRESL. The stretch at 521–577 forms a coiled coil; it reads ANNGKSQFFNEIKTLEDRLDDVDVEISHNQYAEAVELISIIESKLRNIENALTNQRN.

Belongs to the EXO84 family. Component of the exocyst complex.

The protein localises to the cytoplasmic vesicle. Its subcellular location is the secretory vesicle. Functionally, involved in the secretory pathway as part of the exocyst complex which tethers secretory vesicles to the sites of exocytosis. Plays a role in both the assembly of the exocyst and the polarization of this complex to specific sites of the plasma membrane for exocytosis. Also involved in assembly of the spliceosome. This is Exocyst complex component EXO84 (EXO84) from Candida albicans (strain SC5314 / ATCC MYA-2876) (Yeast).